We begin with the raw amino-acid sequence, 128 residues long: Protein ApaG (128 aa).

Positions 1–123 (MTSSPDITVS…FRLDIAPESG (123 aa)) constitute an ApaG domain.

This Deinococcus radiodurans (strain ATCC 13939 / DSM 20539 / JCM 16871 / CCUG 27074 / LMG 4051 / NBRC 15346 / NCIMB 9279 / VKM B-1422 / R1) protein is Protein ApaG.